The sequence spans 428 residues: Probable protein phosphatase 2C 12 (428 aa).

The 270-residue stretch at 24 to 293 folds into the PPM-type phosphatase domain; it reads KIDNPELIHG…DDTTCIVVDI (270 aa). Residues Asp69, Gly70, Asp245, and Asp284 each coordinate Mn(2+). The segment at 301–331 is disordered; sequence ASVPPPKKQGKGMLKSMFKRKTSDSSSNIEK.

It belongs to the PP2C family. It depends on Mg(2+) as a cofactor. Requires Mn(2+) as cofactor.

It catalyses the reaction O-phospho-L-seryl-[protein] + H2O = L-seryl-[protein] + phosphate. The enzyme catalyses O-phospho-L-threonyl-[protein] + H2O = L-threonyl-[protein] + phosphate. This is Probable protein phosphatase 2C 12 from Arabidopsis thaliana (Mouse-ear cress).